The chain runs to 65 residues: Large ribosomal subunit protein bL35 (65 aa).

Basic residues-rich tracts occupy residues Met-1–Lys-16 and His-31–Arg-45. A disordered region spans residues Met-1–Thr-47.

This sequence belongs to the bacterial ribosomal protein bL35 family.

This chain is Large ribosomal subunit protein bL35, found in Leuconostoc citreum (strain KM20).